Reading from the N-terminus, the 411-residue chain is Glucose-1-phosphate adenylyltransferase (411 aa).

Residues Gly-161, 176 to 177 (EK), and Ser-195 contribute to the alpha-D-glucose 1-phosphate site.

It belongs to the bacterial/plant glucose-1-phosphate adenylyltransferase family. In terms of assembly, homotetramer.

It catalyses the reaction alpha-D-glucose 1-phosphate + ATP + H(+) = ADP-alpha-D-glucose + diphosphate. It participates in glycan biosynthesis; glycogen biosynthesis. Involved in the biosynthesis of ADP-glucose, a building block required for the elongation reactions to produce glycogen. Catalyzes the reaction between ATP and alpha-D-glucose 1-phosphate (G1P) to produce pyrophosphate and ADP-Glc. This Anaeromyxobacter sp. (strain Fw109-5) protein is Glucose-1-phosphate adenylyltransferase.